Here is a 370-residue protein sequence, read N- to C-terminus: Dual-specificity RNA methyltransferase RlmN (370 aa).

Glu-93 (proton acceptor) is an active-site residue. The Radical SAM core domain occupies 99-337 (EEGRGTLCVS…VTTVRKTRGD (239 aa)). A disulfide bridge connects residues Cys-106 and Cys-343. Positions 113, 117, and 120 each coordinate [4Fe-4S] cluster. Residues 167–168 (GE), Ser-199, 221–223 (SLH), and Asn-300 contribute to the S-adenosyl-L-methionine site. Cys-343 serves as the catalytic S-methylcysteine intermediate.

The protein belongs to the radical SAM superfamily. RlmN family. Requires [4Fe-4S] cluster as cofactor.

The protein localises to the cytoplasm. It catalyses the reaction adenosine(2503) in 23S rRNA + 2 reduced [2Fe-2S]-[ferredoxin] + 2 S-adenosyl-L-methionine = 2-methyladenosine(2503) in 23S rRNA + 5'-deoxyadenosine + L-methionine + 2 oxidized [2Fe-2S]-[ferredoxin] + S-adenosyl-L-homocysteine. The enzyme catalyses adenosine(37) in tRNA + 2 reduced [2Fe-2S]-[ferredoxin] + 2 S-adenosyl-L-methionine = 2-methyladenosine(37) in tRNA + 5'-deoxyadenosine + L-methionine + 2 oxidized [2Fe-2S]-[ferredoxin] + S-adenosyl-L-homocysteine. In terms of biological role, specifically methylates position 2 of adenine 2503 in 23S rRNA and position 2 of adenine 37 in tRNAs. m2A2503 modification seems to play a crucial role in the proofreading step occurring at the peptidyl transferase center and thus would serve to optimize ribosomal fidelity. This chain is Dual-specificity RNA methyltransferase RlmN, found in Francisella tularensis subsp. holarctica (strain FTNF002-00 / FTA).